The chain runs to 505 residues: Trans-cinnamate 4-monooxygenase (505 aa).

The helical transmembrane segment at 3–23 (LLLIEKTLVALFAAIIGAILI) threads the bilayer. (E)-cinnamate contacts are provided by residues 213–218 (RSRLAQ) and alanine 306. Cysteine 447 lines the heme pocket.

Belongs to the cytochrome P450 family. Heme is required as a cofactor.

The protein resides in the membrane. It carries out the reaction (E)-cinnamate + reduced [NADPH--hemoprotein reductase] + O2 = (E)-4-coumarate + oxidized [NADPH--hemoprotein reductase] + H2O + H(+). The protein operates within phenylpropanoid metabolism; trans-4-coumarate biosynthesis; trans-4-coumarate from trans-cinnamate: step 1/1. Inactivated by piperonylic acid. Catalyzes the first oxidative step of the phenylpropanoid pathway in higher plants by transforming trans-cinnamate into p-coumarate. The compounds formed by this pathway are essential components for lignification, pollination, and defense against ultraviolet light, predators and pathogens. Can also use 2-naphthoic acid as substrate. In Helianthus tuberosus (Jerusalem artichoke), this protein is Trans-cinnamate 4-monooxygenase.